Consider the following 344-residue polypeptide: Fructose-1,6-bisphosphatase class 1 (344 aa).

Mg(2+) contacts are provided by glutamate 91, aspartate 110, leucine 112, and aspartate 113. Substrate-binding positions include 113–116 (DGSS) and asparagine 200. Glutamate 272 lines the Mg(2+) pocket.

It belongs to the FBPase class 1 family. In terms of assembly, homotetramer. It depends on Mg(2+) as a cofactor.

It is found in the cytoplasm. The catalysed reaction is beta-D-fructose 1,6-bisphosphate + H2O = beta-D-fructose 6-phosphate + phosphate. It functions in the pathway carbohydrate biosynthesis; Calvin cycle. The chain is Fructose-1,6-bisphosphatase class 1 from Rhodopseudomonas palustris (strain BisB18).